The primary structure comprises 113 residues: MEHIQKGIAGEQKACAFLEQQGYKIIEKNLRIGKGEIDLIAVHNNCMCFIEVKYRKHNRYGFPEEFVTQKKLLKIQETAEAYIYTVNWQGRIRFDVVAITGEELPVHLMDVTL.

The protein belongs to the UPF0102 family.

The sequence is that of UPF0102 protein CHU_0465 from Cytophaga hutchinsonii (strain ATCC 33406 / DSM 1761 / CIP 103989 / NBRC 15051 / NCIMB 9469 / D465).